A 257-amino-acid polypeptide reads, in one-letter code: Zinc transporter ZupT (257 aa).

3 helical membrane passes run 5–25 (LILT…GVLG), 32–52 (LLAF…LMEM), and 61–81 (GMSP…YFGL). Fe(2+) is bound by residues Asn-120 and Glu-123. Zn(2+)-binding residues include Glu-123 and His-148. The next 4 membrane-spanning stretches (helical) occupy residues 137-157 (LGFG…LAVA), 171-191 (ILWA…AWLI), 195-215 (MISP…MVAL), and 236-256 (GVLC…TAGI). Positions 149, 152, and 181 each coordinate Fe(2+). Glu-152 contributes to the Zn(2+) binding site.

The protein belongs to the ZIP transporter (TC 2.A.5) family. ZupT subfamily.

The protein resides in the cell inner membrane. It catalyses the reaction Zn(2+)(in) = Zn(2+)(out). Functionally, mediates zinc uptake. May also transport other divalent cations. The chain is Zinc transporter ZupT from Escherichia coli O127:H6 (strain E2348/69 / EPEC).